Here is a 539-residue protein sequence, read N- to C-terminus: CTP synthase (539 aa).

The amidoligase domain stretch occupies residues 1-267 (MTKYIFVTGG…DQKVCDFLHL (267 aa)). Ser13 is a binding site for CTP. Ser13 lines the UTP pocket. 14 to 19 (SLGKGI) contacts ATP. Tyr54 serves as a coordination point for L-glutamine. An ATP-binding site is contributed by Asp71. 2 residues coordinate Mg(2+): Asp71 and Glu141. CTP is bound by residues 148–150 (DIE), 188–193 (KTKPTQ), and Lys224. Residues 188–193 (KTKPTQ) and Lys224 each bind UTP. One can recognise a Glutamine amidotransferase type-1 domain in the interval 294-537 (KITLVGKYVE…IGAASGLPAQ (244 aa)). Gly356 serves as a coordination point for L-glutamine. Residue Cys383 is the Nucleophile; for glutamine hydrolysis of the active site. Residues 384–387 (LGMQ), Glu407, and Arg465 each bind L-glutamine. Catalysis depends on residues His510 and Glu512.

It belongs to the CTP synthase family. As to quaternary structure, homotetramer.

The catalysed reaction is UTP + L-glutamine + ATP + H2O = CTP + L-glutamate + ADP + phosphate + 2 H(+). It carries out the reaction L-glutamine + H2O = L-glutamate + NH4(+). It catalyses the reaction UTP + NH4(+) + ATP = CTP + ADP + phosphate + 2 H(+). It participates in pyrimidine metabolism; CTP biosynthesis via de novo pathway; CTP from UDP: step 2/2. Its activity is regulated as follows. Allosterically activated by GTP, when glutamine is the substrate; GTP has no effect on the reaction when ammonia is the substrate. The allosteric effector GTP functions by stabilizing the protein conformation that binds the tetrahedral intermediate(s) formed during glutamine hydrolysis. Inhibited by the product CTP, via allosteric rather than competitive inhibition. In terms of biological role, catalyzes the ATP-dependent amination of UTP to CTP with either L-glutamine or ammonia as the source of nitrogen. Regulates intracellular CTP levels through interactions with the four ribonucleotide triphosphates. The protein is CTP synthase of Lactobacillus acidophilus (strain ATCC 700396 / NCK56 / N2 / NCFM).